Consider the following 156-residue polypeptide: ATP synthase subunit b (156 aa).

The chain crosses the membrane as a helical span at residues 11-31 (AIAFVLFVLFCMKYIWPPIMA).

This sequence belongs to the ATPase B chain family. As to quaternary structure, F-type ATPases have 2 components, F(1) - the catalytic core - and F(0) - the membrane proton channel. F(1) has five subunits: alpha(3), beta(3), gamma(1), delta(1), epsilon(1). F(0) has three main subunits: a(1), b(2) and c(10-14). The alpha and beta chains form an alternating ring which encloses part of the gamma chain. F(1) is attached to F(0) by a central stalk formed by the gamma and epsilon chains, while a peripheral stalk is formed by the delta and b chains.

The protein resides in the cell inner membrane. In terms of biological role, f(1)F(0) ATP synthase produces ATP from ADP in the presence of a proton or sodium gradient. F-type ATPases consist of two structural domains, F(1) containing the extramembraneous catalytic core and F(0) containing the membrane proton channel, linked together by a central stalk and a peripheral stalk. During catalysis, ATP synthesis in the catalytic domain of F(1) is coupled via a rotary mechanism of the central stalk subunits to proton translocation. Component of the F(0) channel, it forms part of the peripheral stalk, linking F(1) to F(0). The polypeptide is ATP synthase subunit b (Yersinia enterocolitica serotype O:8 / biotype 1B (strain NCTC 13174 / 8081)).